A 658-amino-acid polypeptide reads, in one-letter code: Translation factor GUF1, mitochondrial (658 aa).

In terms of domain architecture, tr-type G spans 45 to 231 (ENYRNFSIVA…AVIDRIPPPT (187 aa)). Residues 54 to 61 (AHIDHGKS), 123 to 127 (DTPGH), and 177 to 180 (NKID) contribute to the GTP site.

This sequence belongs to the TRAFAC class translation factor GTPase superfamily. Classic translation factor GTPase family. LepA subfamily.

It localises to the mitochondrion inner membrane. The catalysed reaction is GTP + H2O = GDP + phosphate + H(+). Functionally, promotes mitochondrial protein synthesis. May act as a fidelity factor of the translation reaction, by catalyzing a one-codon backward translocation of tRNAs on improperly translocated ribosomes. Binds to mitochondrial ribosomes in a GTP-dependent manner. The protein is Translation factor GUF1, mitochondrial of Vanderwaltozyma polyspora (strain ATCC 22028 / DSM 70294 / BCRC 21397 / CBS 2163 / NBRC 10782 / NRRL Y-8283 / UCD 57-17) (Kluyveromyces polysporus).